The sequence spans 231 residues: Eukaryotic translation initiation factor 4E-1 (231 aa).

EIF4G-binding regions lie at residues 56-59 and 66-102; these read HPLE and FDNP…NNIH. MRNA contacts are provided by residues 74 to 79, Lys-106, and 124 to 125; these read RQTAWG and WE. Cys-129 and Cys-167 are disulfide-bonded. Residues 150-159 form an EIF4G-binding region; it reads YTLLAMIGHQ. MRNA is bound by residues 174-179 and 219-223; these read RAKGEK and KRLDR.

The protein belongs to the eukaryotic initiation factor 4E family. In terms of assembly, EIF4F is a multi-subunit complex, the composition of which varies with external and internal environmental conditions. It is composed of at least EIF4A, EIF4E and EIF4G. EIF4E is also known to interact with other partners. In higher plants two isoforms of EIF4F have been identified, named isoform EIF4F and isoform EIF(iso)4F. Isoform EIF4F has subunits p220 and p26, whereas isoform EIF(iso)4F has subunits p82 and p28. As to quaternary structure, (Microbial infection) Interacts with potyvirus viral genome-linked protein (VPg); mostly with tobacco etch virus (TEV-HAT) VPg and, to a lower extent, with potato virus Y (PVY-LYE84 and PVY-LYE90) and pepper mottle virus (PepMoV) VPg. Post-translationally, according to the redox status, the Cys-129-Cys-167 disulfide bridge may have a role in regulating protein function by affecting its ability to bind capped mRNA.

It is found in the nucleus. The protein localises to the cytoplasm. Functionally, component of the protein complex eIF4F, which is involved in the recognition of the mRNA cap, ATP-dependent unwinding of 5'-terminal secondary structure and recruitment of mRNA to the ribosome. Recognizes and binds the 7-methylguanosine-containing mRNA cap during an early step in the initiation of protein synthesis and facilitates ribosome binding by inducing the unwinding of the mRNAs secondary structures. Key component of recessive resistance to potyviruses. Its function is as follows. (Microbial infection) Susceptibility host factor required for viral infection (e.g. potato virus Y (PVY), pepper mottle virus (PepMoV) and tobacco etch virus (TEV)) by recruiting viral RNAs to the host ribosomal complex via an interaction with viral genome-linked protein (VPg). The polypeptide is Eukaryotic translation initiation factor 4E-1 (Solanum lycopersicum (Tomato)).